Consider the following 112-residue polypeptide: uncharacterized protein (112 aa).

The next 2 membrane-spanning stretches (helical) occupy residues 7 to 26 (PSFH…TLDY) and 36 to 58 (TYMH…FFLY).

Its subcellular location is the membrane. This is an uncharacterized protein from Saccharomyces cerevisiae (strain ATCC 204508 / S288c) (Baker's yeast).